Consider the following 378-residue polypeptide: Probable pectin lyase A (378 aa).

An N-terminal signal peptide occupies residues 1 to 19; sequence MKFPAFITAIISIASLSSA. 2 disulfides stabilise this stretch: Cys-82–Cys-101 and Cys-91–Cys-225. Arg-255 is an active-site residue. Cysteines 321 and 329 form a disulfide.

This sequence belongs to the polysaccharide lyase 1 family.

Its subcellular location is the secreted. The catalysed reaction is Eliminative cleavage of (1-&gt;4)-alpha-D-galacturonan methyl ester to give oligosaccharides with 4-deoxy-6-O-methyl-alpha-D-galact-4-enuronosyl groups at their non-reducing ends.. Functionally, pectinolytic enzymes consist of four classes of enzymes: pectin lyase, polygalacturonase, pectin methylesterase and rhamnogalacturonase. Among pectinolytic enzymes, pectin lyase is the most important in depolymerization of pectin, since it cleaves internal glycosidic bonds of highly methylated pectins. The sequence is that of Probable pectin lyase A (pelA) from Aspergillus terreus (strain NIH 2624 / FGSC A1156).